The sequence spans 370 residues: Cytochrome b (370 aa).

The next 4 membrane-spanning stretches (helical) occupy residues 30-50 (FGSM…FLAF), 74-96 (WVFR…LHIF), 109-129 (VWMS…MGYV), and 175-195 (FFVL…GHLI). The heme b site is built by His-80 and His-94. His-179 and His-193 together coordinate heme b. His-198 provides a ligand contact to a ubiquinone. A run of 4 helical transmembrane segments spans residues 221–240 (YLGK…VLSL), 284–304 (VLGV…ALVN), 316–336 (FLVF…QCTV), and 342–362 (ILSP…LFIF).

Belongs to the cytochrome b family. As to quaternary structure, the main subunits of complex b-c1 are: cytochrome b, cytochrome c1 and the Rieske protein. The cofactor is heme b.

It localises to the mitochondrion inner membrane. Component of the ubiquinol-cytochrome c reductase complex (complex III or cytochrome b-c1 complex) that is part of the mitochondrial respiratory chain. The b-c1 complex mediates electron transfer from ubiquinol to cytochrome c. Contributes to the generation of a proton gradient across the mitochondrial membrane that is then used for ATP synthesis. The sequence is that of Cytochrome b from Caenorhabditis elegans.